We begin with the raw amino-acid sequence, 154 residues long: Protein X (154 aa).

The segment at 68 to 117 is mitochondrial targeting sequence; that stretch reads PCALRFTSARSMETTVNAHQVLPKVLHKRTLGLSAMSTTDLEAYFKDCLF.

The protein belongs to the orthohepadnavirus protein X family. As to quaternary structure, may form homodimer. May interact with host CEBPA, CFLAR, CREB1, DDB1, E4F1, HBXIP, HSPD1/HSP60, NFKBIA, POLR2E and SMAD4. Interacts with host SMC5-SMC6 complex and induces its degradation. Interacts with host TRPC4AP; leading to prevent ubiquitination of TRPC4AP. Interacts with host PLSCR1; this interaction promotes ubiquitination and degradation of HBx and impairs HBx-mediated cell proliferation. Post-translationally, a fraction may be phosphorylated in insect cells and HepG2 cells, a human hepatoblastoma cell line. Phosphorylated in vitro by host protein kinase C or mitogen-activated protein kinase. N-acetylated in insect cells.

It localises to the host cytoplasm. Its subcellular location is the host nucleus. It is found in the host mitochondrion. In terms of biological role, multifunctional protein that plays a role in silencing host antiviral defenses and promoting viral transcription. Does not seem to be essential for HBV infection. May be directly involved in development of cirrhosis and liver cancer (hepatocellular carcinoma). Most of cytosolic activities involve modulation of cytosolic calcium. The effect on apoptosis is controversial depending on the cell types in which the studies have been conducted. May induce apoptosis by localizing in mitochondria and causing loss of mitochondrial membrane potential. May also modulate apoptosis by binding host CFLAR, a key regulator of the death-inducing signaling complex (DISC). Promotes viral transcription by using the host E3 ubiquitin ligase DDB1 to target the SMC5-SMC6 complex to proteasomal degradation. This host complex would otherwise bind to viral episomal DNA, and prevents its transcription. Moderately stimulates transcription of many different viral and cellular transcription elements. Promoters and enhancers stimulated by HBx contain DNA binding sites for NF-kappa-B, AP-1, AP-2, c-EBP, ATF/CREB, or the calcium-activated factor NF-AT. The chain is Protein X from Homo sapiens (Human).